A 920-amino-acid chain; its full sequence is Bcl-2-associated transcription factor 1 (920 aa).

The tract at residues 1–437 (MGRSNSRSHS…HRNTEEEGLK (437 aa)) is disordered. The span at 23-46 (SRSRSHSRKKRYSSRSRSRTYSRS) shows a compositional bias: basic residues. The segment covering 47-63 (RSRDRMYSRDYRRDYRN) has biased composition (basic and acidic residues). The span at 87–134 (RYHRGGYRPVWNRRHSRSPRRGRSRSRSPKRRSVSSQRSRSRSRRSYR) shows a compositional bias: basic residues. Residues Ser102 and Ser104 each carry the phosphoserine modification. Over residues 135-154 (SSRSPRSSSSRSSSPYSKSP) the composition is skewed to low complexity. Lys152 bears the N6-acetyllysine mark. A compositionally biased stretch (basic and acidic residues) spans 160–196 (GSQEKQTKKAEGEPQEESPLKSKSQEEPKDTFEHDPS). A phosphoserine mark is found at Ser177 and Ser181. Residue Lys188 forms a Glycyl lysine isopeptide (Lys-Gly) (interchain with G-Cter in SUMO2) linkage. A phosphoserine mark is found at Ser196 and Ser198. A Phosphotyrosine modification is found at Tyr219. Residues Ser222, Ser259, Ser262, Ser264, and Ser268 each carry the phosphoserine modification. Tyr284 is subject to Phosphotyrosine. A phosphoserine mark is found at Ser285, Ser290, Ser297, Ser300, and Ser315. Lys332 bears the N6-acetyllysine; alternate mark. Residue Lys332 forms a Glycyl lysine isopeptide (Lys-Gly) (interchain with G-Cter in SUMO2); alternate linkage. Position 339 is a phosphoserine (Arg339). Phosphothreonine is present on residues Thr341 and Thr355. The segment covering 353–373 (GNTRDKEASKEKGSEKGRAEG) has biased composition (basic and acidic residues). Position 383 is a phosphotyrosine (Tyr383). Basic and acidic residues predominate over residues 384 to 396 (FSDKESGKQKFND). Ser385, Ser389, and Ser397 each carry phosphoserine. Residues 397-406 (SEGDDTEETE) show a composition bias toward acidic residues. Residue Thr402 is modified to Phosphothreonine. A Glycyl lysine isopeptide (Lys-Gly) (interchain with G-Cter in SUMO2) cross-link involves residue Lys413. N6-acetyllysine; alternate is present on Lys421. Lys421 participates in a covalent cross-link: Glycyl lysine isopeptide (Lys-Gly) (interchain with G-Cter in SUMO2); alternate. Ser422 and Ser427 each carry phosphoserine. Position 431 is a phosphothreonine (Thr431). The residue at position 437 (Lys437) is an N6-acetyllysine; alternate. Residue Lys437 forms a Glycyl lysine isopeptide (Lys-Gly) (interchain with G-Cter in SUMO2); alternate linkage. At Ser450 the chain carries Phosphoserine. Residues Lys457 and Lys462 each participate in a glycyl lysine isopeptide (Lys-Gly) (interchain with G-Cter in SUMO2) cross-link. Residues 464-502 (TGYVVERPSTTKDKHKEEDKNSERITVKKETQSPEQVKS) are disordered. Ser472 carries the post-translational modification Phosphoserine. Basic and acidic residues predominate over residues 472–502 (STTKDKHKEEDKNSERITVKKETQSPEQVKS). The residue at position 475 (Lys475) is an N6-acetyllysine. Glycyl lysine isopeptide (Lys-Gly) (interchain with G-Cter in SUMO2) cross-links involve residues Lys491 and Lys492. Thr494 carries the phosphothreonine modification. A Phosphoserine modification is found at Ser496. A Glycyl lysine isopeptide (Lys-Gly) (interchain with G-Cter in SUMO2) cross-link involves residue Lys501. A phosphoserine mark is found at Ser502, Ser512, Ser525, and Ser531. Glycyl lysine isopeptide (Lys-Gly) (interchain with G-Cter in SUMO2) cross-links involve residues Lys536, Lys548, and Lys550. A phosphoserine mark is found at Ser559 and Ser564. Thr566 carries the post-translational modification Phosphothreonine. Lys567 is covalently cross-linked (Glycyl lysine isopeptide (Lys-Gly) (interchain with G-Cter in SUMO2)). Ser578 is subject to Phosphoserine. Residue Lys580 forms a Glycyl lysine isopeptide (Lys-Gly) (interchain with G-Cter in SUMO2); alternate linkage. Lys580 participates in a covalent cross-link: Glycyl lysine isopeptide (Lys-Gly) (interchain with G-Cter in SUMO1); alternate. Glycyl lysine isopeptide (Lys-Gly) (interchain with G-Cter in SUMO2) cross-links involve residues Lys593, Lys599, and Lys622. The tract at residues 637 to 796 (KATEEHSTRQ…SGFAGVSRPR (160 aa)) is disordered. Positions 638 to 656 (ATEEHSTRQKSPEIHRRID) are enriched in basic and acidic residues. 3 positions are modified to phosphoserine: Ser648, Ser658, and Ser660. Phosphothreonine is present on Thr661. Basic and acidic residues predominate over residues 668–750 (LAGEERVFKE…KHKREQDHSR (83 aa)). Residue Lys676 forms a Glycyl lysine isopeptide (Lys-Gly) (interchain with G-Cter in SUMO2) linkage. Ser690 and Ser760 each carry phosphoserine. Residues 751-762 (SSSSSASPSSPS) are compositionally biased toward low complexity. Residues 763 to 785 (SREEKESKKEREEEFKTHHEMKE) show a composition bias toward basic and acidic residues. Glycyl lysine isopeptide (Lys-Gly) (interchain with G-Cter in SUMO2) cross-links involve residues Lys778 and Lys784. The residue at position 803 (Arg803) is a Citrulline. Arg809 is modified (omega-N-methylarginine). Over residues 810-825 (GVFAGTNTGPNNSNTT) the composition is skewed to low complexity. Disordered regions lie at residues 810 to 840 (GVFAGTNTGPNNSNTTFQKRPKEEEWDPEYT) and 862 to 920 (RGRG…EEKE). Residue Lys831 forms a Glycyl lysine isopeptide (Lys-Gly) (interchain with G-Cter in SUMO2); alternate linkage. Lys831 is covalently cross-linked (Glycyl lysine isopeptide (Lys-Gly) (interchain with G-Cter in SUMO1); alternate). Acidic residues predominate over residues 897 to 907 (IVEDEEETMEN). The span at 908–920 (NEEKKDRRKEEKE) shows a compositional bias: basic and acidic residues. Residue Lys911 forms a Glycyl lysine isopeptide (Lys-Gly) (interchain with G-Cter in SUMO2) linkage.

The protein belongs to the BCLAF1/THRAP3 family. Interacts with Bcl-2 related proteins, EMD, with the adenovirus E1B 19 kDa protein and with DNA. Component of the SNARP complex which consists at least of SNIP1, SNW1, THRAP3, BCLAF1 and PNN. Component of a MACOM-like complex, named WTAP complex, composed of WTAP, ZC3H13, CBLL1, KIAA1429, RBM15, BCLAF1 and THRAP3. Citrullinated by PADI4. In terms of tissue distribution, ubiquitous.

The protein localises to the cytoplasm. The protein resides in the nucleus. It localises to the nucleus speckle. It is found in the nucleoplasm. Functionally, death-promoting transcriptional repressor. May be involved in cyclin-D1/CCND1 mRNA stability through the SNARP complex which associates with both the 3'end of the CCND1 gene and its mRNA. The protein is Bcl-2-associated transcription factor 1 (BCLAF1) of Homo sapiens (Human).